A 775-amino-acid chain; its full sequence is Chloride channel protein CLC-a (775 aa).

Positions 1–28 (MDEDGNLQISNSNYNGEEEGEDPENNTL) are disordered. The next 12 helical transmembrane spans lie at 88–108 (TLAC…NLAV), 131–151 (GLMV…VLVV), 178–198 (FGFT…AAGL), 206–226 (LVHI…DNHR), 248–268 (GSAS…LFAL), 278–298 (ALLW…RAFI), 328–348 (AADI…GSLY), 371–391 (VLLS…LPFL), 453–473 (MVSL…TFGI), 478–498 (GLFL…GTAM), 510–530 (AVLG…SLCV), and 531–551 (IFLE…VLLI). CBS domains are found at residues 595 to 658 (AKPP…FLNE) and 703 to 768 (TNTT…HLDK). A helical transmembrane segment spans residues 730-750 (HLLVVPKIQASGMSPVIGILT).

Belongs to the chloride channel (TC 2.A.49) family. As to quaternary structure, homodimer. Interacts with PP2A5. Broadly expressed in the plant.

The protein resides in the membrane. Its function is as follows. Voltage-gated chloride channel that could play a role in the regulation of nitrate content. The sequence is that of Chloride channel protein CLC-a (CLC-A) from Arabidopsis thaliana (Mouse-ear cress).